Here is a 62-residue protein sequence, read N- to C-terminus: Protein DsrB (62 aa).

The protein belongs to the DsrB family.

The polypeptide is Protein DsrB (Shigella boydii serotype 18 (strain CDC 3083-94 / BS512)).